A 112-amino-acid polypeptide reads, in one-letter code: C-X-C motif chemokine 6 (112 aa).

The N-terminal stretch at 1 to 36 (MRLLSSRAARVSGPSGSLCALLALLLLTPPGPLASA) is a signal peptide. Disulfide bonds link Cys48-Cys74 and Cys50-Cys90.

The protein belongs to the intercrine alpha (chemokine CxC) family.

The protein localises to the secreted. Its function is as follows. Chemotactic for neutrophil granulocytes. Signals through binding and activation of its receptors (CXCR1 and CXCR2). In addition to its chemotactic and angiogenic properties, it has strong antibacterial activity against Gram-positive and Gram-negative bacteria (90-fold-higher when compared to CXCL5 and CXCL7). The polypeptide is C-X-C motif chemokine 6 (CXCL6) (Bos taurus (Bovine)).